A 166-amino-acid chain; its full sequence is Endoribonuclease YbeY (166 aa).

Zn(2+) is bound by residues His129, His133, and His139.

It belongs to the endoribonuclease YbeY family. Zn(2+) serves as cofactor.

Its subcellular location is the cytoplasm. Its function is as follows. Single strand-specific metallo-endoribonuclease involved in late-stage 70S ribosome quality control and in maturation of the 3' terminus of the 16S rRNA. The chain is Endoribonuclease YbeY from Mesorhizobium japonicum (strain LMG 29417 / CECT 9101 / MAFF 303099) (Mesorhizobium loti (strain MAFF 303099)).